Consider the following 251-residue polypeptide: Geranylgeranylglyceryl phosphate synthase (251 aa).

Positions 25 and 54 each coordinate Mg(2+). Sn-glycerol 1-phosphate-binding positions include 173–179, 204–205, and 226–227; these read YLEAGSG, GG, and GT.

It belongs to the GGGP/HepGP synthase family. Group II subfamily. Mg(2+) serves as cofactor.

It localises to the cytoplasm. The enzyme catalyses sn-glycerol 1-phosphate + (2E,6E,10E)-geranylgeranyl diphosphate = sn-3-O-(geranylgeranyl)glycerol 1-phosphate + diphosphate. It participates in membrane lipid metabolism; glycerophospholipid metabolism. Functionally, prenyltransferase that catalyzes the transfer of the geranylgeranyl moiety of geranylgeranyl diphosphate (GGPP) to the C3 hydroxyl of sn-glycerol-1-phosphate (G1P). This reaction is the first ether-bond-formation step in the biosynthesis of archaeal membrane lipids. This chain is Geranylgeranylglyceryl phosphate synthase, found in Pyrococcus furiosus (strain ATCC 43587 / DSM 3638 / JCM 8422 / Vc1).